The chain runs to 1260 residues: Agglutinin-like protein 1 (1260 aa).

The signal sequence occupies residues 1 to 17 (MLQQFTLLFLYLSIASA). 4 disulfides stabilise this stretch: Cys-73–Cys-150, Cys-96–Cys-112, Cys-205–Cys-298, and Cys-227–Cys-256. Repeat copies occupy residues 433–468 (SPNP…IIRE), 469–504 (PPNH…IIRE), 505–540 (PPNP…IIRE), 541–576 (PPNP…IIRE), 577–612 (PPNH…IIRE), 613–648 (PPNH…IIRE), 649–684 (PPNP…LIRE), 685–720 (PPNH…LIRE), 721–756 (PPNH…IIRE), and 757–792 (PPNP…IIYE). Residues 433–792 (SPNPTVSTTE…GGTDTVIIYE (360 aa)) form a 10 X 36 AA tandem repeats region. N-linked (GlcNAc...) asparagine glycosylation occurs at Asn-471. Residues Asn-579 and Asn-615 are each glycosylated (N-linked (GlcNAc...) asparagine). N-linked (GlcNAc...) asparagine glycans are attached at residues Asn-687 and Asn-723. Residues Asn-820, Asn-886, Asn-918, and Asn-973 are each glycosylated (N-linked (GlcNAc...) asparagine). 2 stretches are compositionally biased toward polar residues: residues 896–918 (PTAS…SSDN) and 964–979 (KVTF…GTHD). 2 disordered regions span residues 896–924 (PTAS…KSGV) and 954–1226 (SIPS…SSSP). Positions 980-995 (SQSTSTEIEIVTTSST) are enriched in low complexity. A 2-1 repeat occupies 983 to 1043 (TSTEIEIVTT…TTSQPTGDNG (61 aa)). The interval 983–1152 (TSTEIEIVTT…ATTQATNENG (170 aa)) is 2 X 26 AA approximate repeats. Residues 1002–1062 (VSSNTDLTSE…PTVATSTLAS (61 aa)) are compositionally biased toward polar residues. N-linked (GlcNAc...) asparagine glycans are attached at residues Asn-1045 and Asn-1068. Residues 1073 to 1090 (HESASTSLKPSMGENSGL) are compositionally biased toward polar residues. A compositionally biased stretch (low complexity) spans 1091-1110 (TTSTEIEATTTSPTEAPSPA). One copy of the 2-2 repeat lies at 1092–1152 (TSTEIEATTT…ATTQATNENG (61 aa)). Over residues 1111-1154 (VSSGTDVTTEPTDTREQPTTLSTTSKTNSESVATTQATNENGGK) the composition is skewed to polar residues. 2 stretches are compositionally biased toward low complexity: residues 1155–1176 (SPST…SANS) and 1197–1226 (SHST…SSSP).

This sequence belongs to the ALS family. N-glycosylated and O-glycosylated. Post-translationally, the GPI-anchor is attached to the protein in the endoplasmic reticulum and serves to target the protein to the cell surface. There, the glucosamine-inositol phospholipid moiety is cleaved off and the GPI-modified mannoprotein is covalently attached via its lipidless GPI glycan remnant to the 1,6-beta-glucan of the outer cell wall layer.

The protein resides in the cell membrane. It is found in the secreted. It localises to the cell wall. In terms of biological role, major cell surface adhesion protein which mediates both yeast-to-host tissue adherence and yeast aggregation. Acts as a downstream effector of the EFG1 regulatory pathway. Required for rapamycin-induced aggregation of C.albicans. Binds glycans and mediates adherence to endothelial and epithelial cells, thereby playing an important role in the pathogenesis of C.albicans infections. This Candida albicans (Yeast) protein is Agglutinin-like protein 1 (ALS1).